A 118-amino-acid chain; its full sequence is Beta-defensin 126 (118 aa).

Residues 1–20 (MKSLLFTLAVFMLLAQLVSG) form the signal peptide. The tract at residues 21–63 (SWYVKKCLNDVGICKKKCKPEELHVKNGWAMCGKQRDCCVPAD) is in vitro binds to LPS, mediates antimicrobial activity and inhibits LPS-mediated inflammation. Disulfide bonds link Cys-27–Cys-58, Cys-34–Cys-52, and Cys-38–Cys-59.

It belongs to the beta-defensin family. In terms of assembly, homodimer or homooligomer; disulfide-linked. Post-translationally, O-glycosylated; glycans contain alpha(2,3)-linked sialic acids.

The protein resides in the secreted. In terms of biological role, highly glycosylated atypical beta-defensin involved in several aspects of sperm function. Facilitates sperm transport in the female reproductive tract and contributes to sperm protection against immunodetection; both functions are probably implicating the negative surface charge provided by its O-linked oligosaccharides in the sperm glycocalyx. Involved in binding of sperm to oviductal epithelial cells to form a sperm reservoir until ovulation. Release from the sperm surface during capacitation and ovaluation by an elevation of oviductal fluid pH is unmasking other surface components and allows sperm to penetrate the cumulus matrix and bind to the zona pellucida of the oocyte. In vitro has antimicrobial activity and may inhibit LPS-mediated inflammation. This chain is Beta-defensin 126 (DEFB126), found in Pongo pygmaeus (Bornean orangutan).